We begin with the raw amino-acid sequence, 850 residues long: Receptor-like serine/threonine-protein kinase SD1-8 (850 aa).

Residues 1 to 26 (MRGLPNFYHSYTFFFFFLLILFPAYS) form the signal peptide. Residues 27-441 (ISANTLSASE…LEDKRNRSAK (415 aa)) lie on the Extracellular side of the membrane. In terms of domain architecture, Bulb-type lectin spans 31–153 (TLSASESLTI…KNSAPDGVLW (123 aa)). N-linked (GlcNAc...) asparagine glycans are attached at residues Asn-43, Asn-118, and Asn-242. An EGF-like domain is found at 292–328 (PKDQCDEYKECGVYGYCDSNTSPVCNCIKGFKPRNPQ). 4 cysteine pairs are disulfide-bonded: Cys-296–Cys-308, Cys-302–Cys-316, Cys-378–Cys-403, and Cys-382–Cys-388. The PAN domain occupies 347-428 (CGGGDGFVRL…GGQDLYVRLA (82 aa)). N-linked (GlcNAc...) asparagine glycosylation is found at Asn-387 and Asn-437. A helical transmembrane segment spans residues 442 to 462 (IIGSSIGVSVLLLLSFIIFFL). Residues 463-850 (WKRKQKRSIL…QITVSVLDAR (388 aa)) lie on the Cytoplasmic side of the membrane. The 282-residue stretch at 526 to 807 (FSNANKLGQG…LMLGSESTTI (282 aa)) folds into the Protein kinase domain. Residues 532-540 (LGQGGFGIV) and Lys-554 contribute to the ATP site. Residues 615 to 632 (SRNSKLNWQMRFDIINGI) are caM-binding. Residue Asp-651 is the Proton acceptor of the active site.

This sequence belongs to the protein kinase superfamily. Ser/Thr protein kinase family. As to quaternary structure, interacts with PUB9, PUB13, PUB14 and PUB38. As to expression, expressed in the root-hypocotyl transition zone, at the base of lateral roots, axillary buds and pedicels.

The protein resides in the cell membrane. It carries out the reaction L-seryl-[protein] + ATP = O-phospho-L-seryl-[protein] + ADP + H(+). The enzyme catalyses L-threonyl-[protein] + ATP = O-phospho-L-threonyl-[protein] + ADP + H(+). Its function is as follows. Involved in the regulation of cellular expansion and differentiation. The protein is Receptor-like serine/threonine-protein kinase SD1-8 (SD18) of Arabidopsis thaliana (Mouse-ear cress).